The sequence spans 246 residues: MLESEVSKQITTPLAAPAFPRGPYRFHNREYLNIIYRTDLDALRKIVPEPLELDGAYVRFEMMAMPDTTGLGSYTECGQAIPVKYNEVKGDYLHMMYLDNEPAIAVGRESSAYPKKFGYPKLFVDSDALVGALKYGALPVVTATMGYKHEPLDLKEAYTQIARPNFMLKIIQGYDGKPRICELICAENTDITIHGAWTGSARLQLFSHALAPLADLPVLEIVSASHILTDLTLGTPKVVHDYLSVK.

Lys-115 serves as the catalytic Schiff-base intermediate with acetoacetate.

It belongs to the ADC family.

It catalyses the reaction acetoacetate + H(+) = acetone + CO2. In terms of biological role, catalyzes the conversion of acetoacetate to acetone and carbon dioxide. This Clostridium beijerinckii (Clostridium MP) protein is Acetoacetate decarboxylase.